Consider the following 139-residue polypeptide: Acidic phospholipase A2 5 (139 aa).

The signal sequence occupies residues 1–16; it reads MRTLWIVAVWLMGVEG. 7 disulfide bridges follow: cysteine 42–cysteine 131, cysteine 44–cysteine 60, cysteine 59–cysteine 111, cysteine 65–cysteine 139, cysteine 66–cysteine 104, cysteine 73–cysteine 97, and cysteine 91–cysteine 102. Tyrosine 43, glycine 45, and glycine 47 together coordinate Ca(2+). Histidine 63 is a catalytic residue. Residue aspartate 64 coordinates Ca(2+). Residue aspartate 105 is part of the active site.

This sequence belongs to the phospholipase A2 family. Group II subfamily. D49 sub-subfamily. Ca(2+) serves as cofactor. As to expression, expressed by the venom gland.

The protein resides in the secreted. It catalyses the reaction a 1,2-diacyl-sn-glycero-3-phosphocholine + H2O = a 1-acyl-sn-glycero-3-phosphocholine + a fatty acid + H(+). Its function is as follows. PLA2 catalyzes the calcium-dependent hydrolysis of the 2-acyl groups in 3-sn-phosphoglycerides. This chain is Acidic phospholipase A2 5, found in Echis pyramidum leakeyi (Leakey's carpet viper).